The sequence spans 186 residues: uncharacterized protein (186 aa).

Residues 89 to 164 (LMSLGIGEDI…NTPLKLYSIY (76 aa)) enclose the Cupin type-2 domain. 117-124 (GIVKMGKS) is a binding site for ATP.

This is an uncharacterized protein from Bacillus subtilis (strain 168).